The following is a 747-amino-acid chain: Mitochondrial inner membrane i-AAA protease supercomplex subunit YME1 (747 aa).

The segment covering lysine 51–serine 64 has biased composition (basic and acidic residues). A disordered region spans residues lysine 51–threonine 92. Positions glycine 66–serine 80 are enriched in polar residues. Position 321–328 (glycine 321–threonine 328) interacts with ATP. Residue histidine 540 participates in Zn(2+) binding. The active site involves glutamate 541. Residues histidine 544 and aspartate 618 each coordinate Zn(2+). The interval serine 718–alanine 747 is disordered. Basic and acidic residues predominate over residues serine 728–lysine 740.

It in the N-terminal section; belongs to the AAA ATPase family. The protein in the C-terminal section; belongs to the peptidase M41 family. As to quaternary structure, component of the mitochondrial inner membrane i-AAA protease supercomplex composed of MGR1, MGR3 and YME1. Interacts directly with MGR1. Zn(2+) is required as a cofactor.

It localises to the mitochondrion inner membrane. Catalytic subunit of the mitochondrial inner membrane i-AAA protease supercomplex required for mitochondrial inner membrane protein turnover. The protease is probably ATP-dependent. Important to maintain the integrity of the mitochondrial compartment. Required both for the degradation of unassembled subunit 2 of cytochrome c oxidase (COX2) and for efficient assembly of mitochondrial respiratory chain. Binds unfolded substrates in an ATPase-independent manner; binding of folded COX2, a physiological substrate, requires an active ATPase but when COX2 is destabilized an active ATPase is no longer necessary. May process ATG32. The polypeptide is Mitochondrial inner membrane i-AAA protease supercomplex subunit YME1 (YME1) (Saccharomyces cerevisiae (strain ATCC 204508 / S288c) (Baker's yeast)).